The primary structure comprises 528 residues: Probable feruloyl esterase B-1 (528 aa).

The first 19 residues, 1–19 (MMWWFLLIGLASAAATASS), serve as a signal peptide directing secretion. 6 cysteine pairs are disulfide-bonded: Cys-29-Cys-78, Cys-64-Cys-117, Cys-190-Cys-445, Cys-259-Cys-276, Cys-285-Cys-295, and Cys-505-Cys-527. N-linked (GlcNAc...) asparagine glycosylation is found at Asn-83 and Asn-101. The Acyl-ester intermediate role is filled by Ser-191. 5 residues coordinate Ca(2+): Asp-260, Asp-263, Ala-265, Asp-267, and Ile-269. Asn-286, Asn-354, and Asn-385 each carry an N-linked (GlcNAc...) asparagine glycan. Active-site charge relay system residues include Asp-404 and His-444.

This sequence belongs to the tannase family.

The protein localises to the secreted. The enzyme catalyses feruloyl-polysaccharide + H2O = ferulate + polysaccharide.. Functionally, involved in degradation of plant cell walls. Hydrolyzes the feruloyl-arabinose ester bond in arabinoxylans as well as the feruloyl-galactose and feruloyl-arabinose ester bonds in pectin. In Aspergillus fumigatus (strain CBS 144.89 / FGSC A1163 / CEA10) (Neosartorya fumigata), this protein is Probable feruloyl esterase B-1 (faeB-1).